The primary structure comprises 218 residues: Radial spoke head 1 homolog (218 aa).

Residues 1–13 (MSDAGTEEFDEEQ) show a composition bias toward acidic residues. Residues 1–48 (MSDAGTEEFDEEQGSLGEYEGDRNEAGERHGQGKAVLPRGDTYQGAYE) form a disordered region. MORN repeat units follow at residues 19–42 (YEGD…RGDT), 43–65 (YQGA…NGAR), 66–88 (YTGE…DGSK), 89–111 (YEGS…NGDT), 112–134 (YDGE…ETGS), and 158–180 (YHGN…IGCE). A compositionally biased stretch (basic and acidic residues) spans 20–31 (EGDRNEAGERHG).

Component of the axonemal radial spoke complexes. Interacts with septin SEPT7. In terms of tissue distribution, testis-specific.

Its subcellular location is the cytoplasm. The protein resides in the cytoskeleton. It is found in the cilium axoneme. The protein localises to the flagellum basal body. It localises to the flagellum axoneme. Functions as part of axonemal radial spoke complexes that play an important part in the motility of sperm and cilia. The polypeptide is Radial spoke head 1 homolog (rsph1) (Cyprinus carpio (Common carp)).